A 221-amino-acid polypeptide reads, in one-letter code: Phosphoglycolate phosphatase (221 aa).

Catalysis depends on Asp7, which acts as the Nucleophile. Residues Asp7 and Asp9 each contribute to the Mg(2+) site. Substrate is bound at residue Lys148. The Mg(2+) site is built by Asp171 and Asp175.

Belongs to the archaeal SPP-like hydrolase family. It depends on Mg(2+) as a cofactor.

The catalysed reaction is 2-phosphoglycolate + H2O = glycolate + phosphate. Functionally, catalyzes the dephosphorylation of 2-phosphoglycolate. The protein is Phosphoglycolate phosphatase of Methanothermobacter thermautotrophicus (strain ATCC 29096 / DSM 1053 / JCM 10044 / NBRC 100330 / Delta H) (Methanobacterium thermoautotrophicum).